The following is a 134-amino-acid chain: Small ribosomal subunit protein uS11 (134 aa).

The tract at residues 114–134 (TPVPHNGTRPPRKWFKRQEKR) is disordered. Positions 123–134 (PPRKWFKRQEKR) are enriched in basic residues.

It belongs to the universal ribosomal protein uS11 family. As to quaternary structure, part of the 30S ribosomal subunit. Interacts with proteins S7 and S18. Binds to IF-3.

In terms of biological role, located on the platform of the 30S subunit, it bridges several disparate RNA helices of the 16S rRNA. Forms part of the Shine-Dalgarno cleft in the 70S ribosome. This chain is Small ribosomal subunit protein uS11, found in Mesomycoplasma hyopneumoniae (strain 232) (Mycoplasma hyopneumoniae).